A 181-amino-acid chain; its full sequence is Large ribosomal subunit protein uL5 (181 aa).

Belongs to the universal ribosomal protein uL5 family. As to quaternary structure, part of the 50S ribosomal subunit; part of the 5S rRNA/L5/L18/L25 subcomplex. Contacts the 5S rRNA and the P site tRNA. Forms a bridge to the 30S subunit in the 70S ribosome.

In terms of biological role, this is one of the proteins that bind and probably mediate the attachment of the 5S RNA into the large ribosomal subunit, where it forms part of the central protuberance. In the 70S ribosome it contacts protein S13 of the 30S subunit (bridge B1b), connecting the 2 subunits; this bridge is implicated in subunit movement. Contacts the P site tRNA; the 5S rRNA and some of its associated proteins might help stabilize positioning of ribosome-bound tRNAs. This chain is Large ribosomal subunit protein uL5, found in Helicobacter acinonychis (strain Sheeba).